The primary structure comprises 317 residues: MPIKIPDQLPAAEVLGQENIFVMTESRAVTQNIRPLRVLILNLMPKKIETEIQLMRMLSNSPLQVDVDLLRIDDRESKNTPQAHLENFYHDFEQVRGNNYDGMIITGAPLGLVEFEEVVYWPRIVEIIEWSHQHVTSTLFLCWAVQAALKALYGMEKQTHGEKLSGVYRHHRLDEHEPLLRGFDDEFVAPHSRYAAFDGDLIRAHTDLQIFAESAEAGVYLAATKDCRQVFVTGHPEYDALTLDGEYQRDLAAGLEPVIPVNYYPDNDPTRTPRASWRSHGHLLFSNWLNYYVYQLTSYRVEDIGKVFTYQQNSPSR.

Residue cysteine 142 is the Acyl-thioester intermediate of the active site. Positions 163 and 192 each coordinate substrate. Histidine 235 acts as the Proton acceptor in catalysis. Residue glutamate 237 is part of the active site. Arginine 249 contributes to the substrate binding site.

This sequence belongs to the MetA family.

The protein localises to the cytoplasm. It carries out the reaction L-homoserine + succinyl-CoA = O-succinyl-L-homoserine + CoA. The protein operates within amino-acid biosynthesis; L-methionine biosynthesis via de novo pathway; O-succinyl-L-homoserine from L-homoserine: step 1/1. Transfers a succinyl group from succinyl-CoA to L-homoserine, forming succinyl-L-homoserine. This is Homoserine O-succinyltransferase from Aeromonas hydrophila subsp. hydrophila (strain ATCC 7966 / DSM 30187 / BCRC 13018 / CCUG 14551 / JCM 1027 / KCTC 2358 / NCIMB 9240 / NCTC 8049).